The following is a 205-amino-acid chain: Holliday junction branch migration complex subunit RuvA (205 aa).

Residues 1–64 are domain I; it reads MIGRLRGIIL…EDAQLLFGFN (64 aa). A domain II region spans residues 65–142; sequence DKQERALFRE…KGLSGDLFNP (78 aa). Residues 143–156 form a flexible linker region; it reads VSDIPLASPASAES. The segment at 157–205 is domain III; sequence RASDPEAEAAAALVALGYKPQEASRMISKIARPEADCETLIRDALRAAL.

The protein belongs to the RuvA family. Homotetramer. Forms an RuvA(8)-RuvB(12)-Holliday junction (HJ) complex. HJ DNA is sandwiched between 2 RuvA tetramers; dsDNA enters through RuvA and exits via RuvB. An RuvB hexamer assembles on each DNA strand where it exits the tetramer. Each RuvB hexamer is contacted by two RuvA subunits (via domain III) on 2 adjacent RuvB subunits; this complex drives branch migration. In the full resolvosome a probable DNA-RuvA(4)-RuvB(12)-RuvC(2) complex forms which resolves the HJ.

The protein resides in the cytoplasm. Its function is as follows. The RuvA-RuvB-RuvC complex processes Holliday junction (HJ) DNA during genetic recombination and DNA repair, while the RuvA-RuvB complex plays an important role in the rescue of blocked DNA replication forks via replication fork reversal (RFR). RuvA specifically binds to HJ cruciform DNA, conferring on it an open structure. The RuvB hexamer acts as an ATP-dependent pump, pulling dsDNA into and through the RuvAB complex. HJ branch migration allows RuvC to scan DNA until it finds its consensus sequence, where it cleaves and resolves the cruciform DNA. This chain is Holliday junction branch migration complex subunit RuvA, found in Pectobacterium carotovorum subsp. carotovorum (strain PC1).